Here is a 30-residue protein sequence, read N- to C-terminus: Uperin-6.2 (30 aa).

As to expression, expressed by the skin dorsal glands.

The protein localises to the secreted. The sequence is that of Uperin-6.2 from Uperoleia inundata (Floodplain toadlet).